We begin with the raw amino-acid sequence, 278 residues long: Trehalose monomycolate transport factor A (278 aa).

Position 1 (Met-1) is a topological domain, periplasmic. The helical transmembrane segment at 2–22 (VPLWFTLSALCFVGAAVLLYV) threads the bilayer. Residues 23–278 (DIDRRRGLGR…NGREASHFQR (256 aa)) are Cytoplasmic-facing. Positions 200–278 (PPVPQNGSQA…NGREASHFQR (79 aa)) are disordered. The span at 269 to 278 (NGREASHFQR) shows a compositional bias: basic and acidic residues.

Monomer. Interacts (via N-terminus) with MmpL3; active trehalose monomycolate (TMM) biosynthesis is not required for the complex formation. Interacts with MSMEG_5308.

The protein localises to the cell inner membrane. Its subcellular location is the cell septum. The protein resides in the cell tip. Its function is as follows. Required for MmpL3-dependent trehalose monomycolate (TMM) transport to the cell wall. Required for growth and cell elongation. The polypeptide is Trehalose monomycolate transport factor A (Mycolicibacterium smegmatis (strain ATCC 700084 / mc(2)155) (Mycobacterium smegmatis)).